The primary structure comprises 458 residues: Elongation factor 1-alpha (458 aa).

Glycine 2 carries the post-translational modification N,N,N-trimethylglycine. Residue lysine 3 is modified to N6,N6-dimethyllysine; alternate. N6-methyllysine; alternate is present on lysine 3. One can recognise a tr-type G domain in the interval 5 to 240 (KTHVNVVVIG…DAIEPPQRPT (236 aa)). The tract at residues 14 to 21 (GHVDSGKS) is G1. 14–21 (GHVDSGKS) is a GTP binding site. Lysine 30 is modified (N6-methyllysine). A G2 region spans residues 70-74 (GITID). The residue at position 79 (lysine 79) is an N6,N6,N6-trimethyllysine. The tract at residues 91–94 (DAPG) is G3. GTP is bound by residues 91-95 (DAPGH) and 153-156 (NKMD). A G4 region spans residues 153–156 (NKMD). Residues 192–194 (SGW) are G5. Lysine 316 carries the post-translational modification N6,N6-dimethyllysine; alternate. Lysine 316 bears the N6-methyllysine; alternate mark. Lysine 390 carries the N6-methyllysine modification.

The protein belongs to the TRAFAC class translation factor GTPase superfamily. Classic translation factor GTPase family. EF-Tu/EF-1A subfamily.

It localises to the cytoplasm. It participates in protein biosynthesis; polypeptide chain elongation. In terms of biological role, this protein promotes the GTP-dependent binding of aminoacyl-tRNA to the A-site of ribosomes during protein biosynthesis. In Meyerozyma guilliermondii (strain ATCC 6260 / CBS 566 / DSM 6381 / JCM 1539 / NBRC 10279 / NRRL Y-324) (Yeast), this protein is Elongation factor 1-alpha (TEF1).